The following is a 314-amino-acid chain: 4-hydroxy-3-methylbut-2-enyl diphosphate reductase (314 aa).

[4Fe-4S] cluster is bound at residue Cys-12. His-41 and His-74 together coordinate (2E)-4-hydroxy-3-methylbut-2-enyl diphosphate. Residues His-41 and His-74 each coordinate dimethylallyl diphosphate. Isopentenyl diphosphate is bound by residues His-41 and His-74. Cys-96 provides a ligand contact to [4Fe-4S] cluster. His-124 contacts (2E)-4-hydroxy-3-methylbut-2-enyl diphosphate. His-124 lines the dimethylallyl diphosphate pocket. His-124 contacts isopentenyl diphosphate. Glu-126 serves as the catalytic Proton donor. A (2E)-4-hydroxy-3-methylbut-2-enyl diphosphate-binding site is contributed by Thr-167. Position 197 (Cys-197) interacts with [4Fe-4S] cluster. 4 residues coordinate (2E)-4-hydroxy-3-methylbut-2-enyl diphosphate: Ser-225, Ser-226, Asn-227, and Ser-269. Dimethylallyl diphosphate-binding residues include Ser-225, Ser-226, Asn-227, and Ser-269. Positions 225, 226, 227, and 269 each coordinate isopentenyl diphosphate.

This sequence belongs to the IspH family. [4Fe-4S] cluster serves as cofactor.

The enzyme catalyses isopentenyl diphosphate + 2 oxidized [2Fe-2S]-[ferredoxin] + H2O = (2E)-4-hydroxy-3-methylbut-2-enyl diphosphate + 2 reduced [2Fe-2S]-[ferredoxin] + 2 H(+). The catalysed reaction is dimethylallyl diphosphate + 2 oxidized [2Fe-2S]-[ferredoxin] + H2O = (2E)-4-hydroxy-3-methylbut-2-enyl diphosphate + 2 reduced [2Fe-2S]-[ferredoxin] + 2 H(+). It participates in isoprenoid biosynthesis; dimethylallyl diphosphate biosynthesis; dimethylallyl diphosphate from (2E)-4-hydroxy-3-methylbutenyl diphosphate: step 1/1. It functions in the pathway isoprenoid biosynthesis; isopentenyl diphosphate biosynthesis via DXP pathway; isopentenyl diphosphate from 1-deoxy-D-xylulose 5-phosphate: step 6/6. In terms of biological role, catalyzes the conversion of 1-hydroxy-2-methyl-2-(E)-butenyl 4-diphosphate (HMBPP) into a mixture of isopentenyl diphosphate (IPP) and dimethylallyl diphosphate (DMAPP). Acts in the terminal step of the DOXP/MEP pathway for isoprenoid precursor biosynthesis. The chain is 4-hydroxy-3-methylbut-2-enyl diphosphate reductase from Haemophilus influenzae (strain ATCC 51907 / DSM 11121 / KW20 / Rd).